The primary structure comprises 881 residues: Alanine--tRNA ligase (881 aa).

Positions 568, 572, 670, and 674 each coordinate Zn(2+).

This sequence belongs to the class-II aminoacyl-tRNA synthetase family. Zn(2+) serves as cofactor.

It localises to the cytoplasm. It catalyses the reaction tRNA(Ala) + L-alanine + ATP = L-alanyl-tRNA(Ala) + AMP + diphosphate. Functionally, catalyzes the attachment of alanine to tRNA(Ala) in a two-step reaction: alanine is first activated by ATP to form Ala-AMP and then transferred to the acceptor end of tRNA(Ala). Also edits incorrectly charged Ser-tRNA(Ala) and Gly-tRNA(Ala) via its editing domain. The sequence is that of Alanine--tRNA ligase from Moorella thermoacetica (strain ATCC 39073 / JCM 9320).